The sequence spans 488 residues: ATP synthase subunit beta (488 aa).

164–171 is an ATP binding site; that stretch reads GGAGVGKT.

Belongs to the ATPase alpha/beta chains family. In terms of assembly, F-type ATPases have 2 components, CF(1) - the catalytic core - and CF(0) - the membrane proton channel. CF(1) has five subunits: alpha(3), beta(3), gamma(1), delta(1), epsilon(1). CF(0) has four main subunits: a(1), b(1), b'(1) and c(9-12).

The protein resides in the cellular thylakoid membrane. It catalyses the reaction ATP + H2O + 4 H(+)(in) = ADP + phosphate + 5 H(+)(out). In terms of biological role, produces ATP from ADP in the presence of a proton gradient across the membrane. The catalytic sites are hosted primarily by the beta subunits. The sequence is that of ATP synthase subunit beta from Prochlorococcus marinus (strain NATL1A).